Here is a 494-residue protein sequence, read N- to C-terminus: Chromosomal replication initiator protein DnaA (494 aa).

Positions 1–103 (MTNIGGPVVE…LRVEVIVRGM (103 aa)) are domain I, interacts with DnaA modulators. The segment at 103-148 (MKRVSKGVVCRTSAAPVVLEGQTASSFVESYTEPSVKDIEAGVFGS) is domain II. The interval 149-371 (PLDSRYTFES…GAFNQLLFRQ (223 aa)) is domain III, AAA+ region. Positions 195, 197, 198, and 199 each coordinate ATP. The interval 372-494 (SFESDLSLER…LKRLIGEQAA (123 aa)) is domain IV, binds dsDNA.

This sequence belongs to the DnaA family. Oligomerizes as a right-handed, spiral filament on DNA at oriC.

Its subcellular location is the cytoplasm. In terms of biological role, plays an essential role in the initiation and regulation of chromosomal replication. ATP-DnaA binds to the origin of replication (oriC) to initiate formation of the DNA replication initiation complex once per cell cycle. Binds the DnaA box (a 9 base pair repeat at the origin) and separates the double-stranded (ds)DNA. Forms a right-handed helical filament on oriC DNA; dsDNA binds to the exterior of the filament while single-stranded (ss)DNA is stabiized in the filament's interior. The ATP-DnaA-oriC complex binds and stabilizes one strand of the AT-rich DNA unwinding element (DUE), permitting loading of DNA polymerase. After initiation quickly degrades to an ADP-DnaA complex that is not apt for DNA replication. Binds acidic phospholipids. The chain is Chromosomal replication initiator protein DnaA from Bartonella quintana (strain Toulouse) (Rochalimaea quintana).